A 389-amino-acid polypeptide reads, in one-letter code: Cuticlin-3 (389 aa).

The signal sequence occupies residues 1–19; the sequence is MARYSLGLGLCLLVASVSA. Residues 20–354 lie on the Extracellular side of the membrane; that stretch reads IPVDNNVEGE…ELCISSFHIS (335 aa). The ZP domain maps to 33-278; sequence ECGPTSITVN…PTCSEPQGFG (246 aa). N-linked (GlcNAc...) asparagine glycosylation is present at Asn-284. A helical transmembrane segment spans residues 355–375; it reads VVTVFLGLTVFVAIFITYMIV. The Cytoplasmic segment spans residues 376 to 389; the sequence is SRMMVPSDKMQSAC.

Its subcellular location is the cell membrane. Its function is as follows. Plays a role in alae formation in L1 larvae. In Caenorhabditis elegans, this protein is Cuticlin-3.